A 397-amino-acid chain; its full sequence is Putative nickel insertion protein (397 aa).

The protein belongs to the LarC family.

The polypeptide is Putative nickel insertion protein (Synechococcus sp. (strain JA-2-3B'a(2-13)) (Cyanobacteria bacterium Yellowstone B-Prime)).